A 218-amino-acid polypeptide reads, in one-letter code: Adenylate kinase (218 aa).

Residue Gly-10 to Thr-15 coordinates ATP. An NMP region spans residues Ser-30–Val-59. AMP is bound by residues Thr-31, Arg-36, Gly-57–Val-59, Gly-85–Arg-88, and Gln-92. The LID stretch occupies residues Gly-122–Asp-159. ATP-binding positions include Arg-123 and Ser-132–Tyr-133. The AMP site is built by Arg-156 and Arg-167. Gly-203 provides a ligand contact to ATP.

This sequence belongs to the adenylate kinase family. As to quaternary structure, monomer.

The protein resides in the cytoplasm. The catalysed reaction is AMP + ATP = 2 ADP. Its pathway is purine metabolism; AMP biosynthesis via salvage pathway; AMP from ADP: step 1/1. In terms of biological role, catalyzes the reversible transfer of the terminal phosphate group between ATP and AMP. Plays an important role in cellular energy homeostasis and in adenine nucleotide metabolism. In Bordetella petrii (strain ATCC BAA-461 / DSM 12804 / CCUG 43448), this protein is Adenylate kinase.